The sequence spans 177 residues: Large ribosomal subunit protein uL6 (177 aa).

It belongs to the universal ribosomal protein uL6 family. In terms of assembly, part of the 50S ribosomal subunit.

This protein binds to the 23S rRNA, and is important in its secondary structure. It is located near the subunit interface in the base of the L7/L12 stalk, and near the tRNA binding site of the peptidyltransferase center. This chain is Large ribosomal subunit protein uL6, found in Proteus mirabilis (strain HI4320).